A 354-amino-acid chain; its full sequence is MKVAILGAGCYRTHAASGITNFSRAAQVAKEVGIPEITMTHSTITMGAELLHLIPEVTEVVVSDPCFAEEPGIVVLDQFDYGAVMEAHLAGDAEKVMPEIRAAVKAKAKETPKPPKGCIHFVHPEKVGLKVTSNDVEAVKDADIVITWLPKGGSQPAIIEKFASEIKKGAVVTHACTIPTPKFAKIFKDLGRDDLNIISFHPGAVPEMKGQAFLSEGLADAEKVEEFYCIAKAARGEAFKMPANLISPVCDMGSAVTAPVYAAILAYRDAVTQILGAPADFAQMMADEAISQMLDLMRKEGIKNMEEKLSPKALTGTADSMCFGPLAEILPASLKVLEKHAKENKCECGCSIKP.

The protein belongs to the HMD family.

It carries out the reaction 5,10-methenyl-5,6,7,8-tetrahydromethanopterin + H2 = 5,10-methylenetetrahydromethanopterin + H(+). The protein operates within one-carbon metabolism; methanogenesis from CO(2); 5,10-methylene-5,6,7,8-tetrahydromethanopterin from 5,10-methenyl-5,6,7,8-tetrahydromethanopterin (hydrogen route): step 1/1. In terms of biological role, catalyzes the reversible reduction of methenyl-H(4)MPT(+) to methylene-H(4)MPT. The protein is 5,10-methenyltetrahydromethanopterin hydrogenase of Methanococcus vannielii (strain ATCC 35089 / DSM 1224 / JCM 13029 / OCM 148 / SB).